A 343-amino-acid polypeptide reads, in one-letter code: Biotin synthase (343 aa).

A Radical SAM core domain is found at 36-254 (NTIQISTLLS…IAVARIMMPK (219 aa)). The [4Fe-4S] cluster site is built by C51, C55, and C58. Positions 95, 126, 186, and 258 each coordinate [2Fe-2S] cluster.

The protein belongs to the radical SAM superfamily. Biotin synthase family. In terms of assembly, homodimer. [4Fe-4S] cluster serves as cofactor. It depends on [2Fe-2S] cluster as a cofactor.

It catalyses the reaction (4R,5S)-dethiobiotin + (sulfur carrier)-SH + 2 reduced [2Fe-2S]-[ferredoxin] + 2 S-adenosyl-L-methionine = (sulfur carrier)-H + biotin + 2 5'-deoxyadenosine + 2 L-methionine + 2 oxidized [2Fe-2S]-[ferredoxin]. It functions in the pathway cofactor biosynthesis; biotin biosynthesis; biotin from 7,8-diaminononanoate: step 2/2. Catalyzes the conversion of dethiobiotin (DTB) to biotin by the insertion of a sulfur atom into dethiobiotin via a radical-based mechanism. This is Biotin synthase from Buchnera aphidicola subsp. Acyrthosiphon pisum (strain 5A).